The chain runs to 432 residues: Adenylosuccinate synthetase (432 aa).

GTP is bound by residues 13–19 and 41–43; these read GDEGKGK and GHT. The active-site Proton acceptor is the aspartate 14. Positions 14 and 41 each coordinate Mg(2+). Residues 14–17, 39–42, threonine 131, arginine 145, glutamine 226, threonine 241, and arginine 305 each bind IMP; these read DEGK and NAGH. The Proton donor role is filled by histidine 42. 301–307 lines the substrate pocket; sequence SVTGRAR. GTP is bound by residues arginine 307, 333–335, and 416–418; these read KLD and STG.

Belongs to the adenylosuccinate synthetase family. Homodimer. Mg(2+) is required as a cofactor.

It is found in the cytoplasm. It carries out the reaction IMP + L-aspartate + GTP = N(6)-(1,2-dicarboxyethyl)-AMP + GDP + phosphate + 2 H(+). The protein operates within purine metabolism; AMP biosynthesis via de novo pathway; AMP from IMP: step 1/2. Functionally, plays an important role in the de novo pathway of purine nucleotide biosynthesis. Catalyzes the first committed step in the biosynthesis of AMP from IMP. This Neisseria meningitidis serogroup B (strain ATCC BAA-335 / MC58) protein is Adenylosuccinate synthetase.